The sequence spans 203 residues: Short chain dehydrogenase/reductase dpmpH (203 aa).

3 residues coordinate NADP(+): aspartate 23, tyrosine 77, and lysine 81. The active-site Proton acceptor is tyrosine 77. Lysine 81 serves as the catalytic Lowers pKa of active site Tyr.

This sequence belongs to the short-chain dehydrogenases/reductases (SDR) family.

Its pathway is secondary metabolite biosynthesis; terpenoid biosynthesis. Short chain dehydrogenase/reductase; part of the gene cluster that mediates the biosynthesis of diterpenoid pyrones. The first step of the pathway is the synthesis of the alpha-pyrone moiety by the polyketide synthase dpmpA via condensation of one acetyl-CoA starter unit with 3 malonyl-CoA units and 2 methylations. The alpha-pyrone is then combined with geranylgeranyl pyrophosphate (GGPP) formed by the GGPP synthase dpmpD through the action of the prenyltransferase dpmpC to yield a linear alpha-pyrone diterpenoid. Subsequent steps in the diterpenoid pyrone biosynthetic pathway involve the decalin core formation, which is initiated by the epoxidation of the C10-C11 olefin by the FAD-dependent oxidoreductase dpmpE, and is followed by a cyclization cascade catalyzed by the terpene cyclase dpmpB. The short chain dehydrogenase/reductase dpmpG then oxidizes the 8S hydroxy group to a ketone and the short chain dehydrogenase/reductase dpmpH reduces the ketone to the 8R hydroxy group to yield higginsianin B. Higginsianin B is further methylated by the methyltransferase dpmpI to produce the intermediate named FDDP B. The cytochrome P450 monooxygenase dpmpJ then oxidizes the C-26 methyl to primary alcohol, producing the final diterpenoid pyrone with a C-26 primary alcohol on the gamma-pyrone moiety named FDDP C. This chain is Short chain dehydrogenase/reductase dpmpH, found in Macrophomina phaseolina (strain MS6) (Charcoal rot fungus).